We begin with the raw amino-acid sequence, 492 residues long: G2/mitotic-specific cyclin CLB2 (492 aa).

The segment at 1–176 (MPQVTKTNNE…QPEVGERSQS (176 aa)) is disordered. Over residues 23-33 (QESISTIKNTT) the composition is skewed to polar residues. Over residues 34–58 (ISNSQHKQQTQQQISSPPQVSVTSS) the composition is skewed to low complexity. Residues 59-83 (EGVSHVNTRQYLGDVSNQYITNAKP) show a composition bias toward polar residues. Low complexity predominate over residues 111–135 (ASDNNNNGSTSSSSNSSNNNNNDAN). The 127-residue stretch at 208–334 (EIFSYYYELE…MLTILNFDLN (127 aa)) folds into the Cyclin N-terminal domain.

It belongs to the cyclin family. Cyclin AB subfamily.

In terms of biological role, 2/mitotic-specific cyclin essential for the control of the cell cycle at the G2/M (mitosis) transition. G2/M cyclins accumulate steadily during G2 and are abruptly destroyed at mitosis. Degradation is necessary for the cell to exit from mitosis. Plays a role in morphogenesis by negatively regulating polarized growth. Through binding to CDC28 regulates cytokinesis, partly by phosphorylation of the actomyosin ring component IQG1. Also involved in the phosphorylation of CDC6 and CDC54. The chain is G2/mitotic-specific cyclin CLB2 (CLB2) from Candida albicans (strain SC5314 / ATCC MYA-2876) (Yeast).